Consider the following 164-residue polypeptide: 6,7-dimethyl-8-ribityllumazine synthase (164 aa).

5-amino-6-(D-ribitylamino)uracil is bound by residues Tyr30, 61 to 63, and 85 to 87; these read ALE and CVI. 90–91 serves as a coordination point for (2S)-2-hydroxy-3-oxobutyl phosphate; it reads ET. His93 (proton donor) is an active-site residue. Asn118 contributes to the 5-amino-6-(D-ribitylamino)uracil binding site. Position 132 (Arg132) interacts with (2S)-2-hydroxy-3-oxobutyl phosphate.

The protein belongs to the DMRL synthase family.

The catalysed reaction is (2S)-2-hydroxy-3-oxobutyl phosphate + 5-amino-6-(D-ribitylamino)uracil = 6,7-dimethyl-8-(1-D-ribityl)lumazine + phosphate + 2 H2O + H(+). It functions in the pathway cofactor biosynthesis; riboflavin biosynthesis; riboflavin from 2-hydroxy-3-oxobutyl phosphate and 5-amino-6-(D-ribitylamino)uracil: step 1/2. In terms of biological role, catalyzes the formation of 6,7-dimethyl-8-ribityllumazine by condensation of 5-amino-6-(D-ribitylamino)uracil with 3,4-dihydroxy-2-butanone 4-phosphate. This is the penultimate step in the biosynthesis of riboflavin. The protein is 6,7-dimethyl-8-ribityllumazine synthase of Methylobacterium radiotolerans (strain ATCC 27329 / DSM 1819 / JCM 2831 / NBRC 15690 / NCIMB 10815 / 0-1).